The sequence spans 218 residues: Capsid protein (218 aa).

At Met-1 the chain carries N-acetylmethionine; by host. A compositionally biased stretch (low complexity) spans 1 to 10; sequence MDKSDSASAG. The tract at residues 1–28 is disordered; the sequence is MDKSDSASAGRNRRRRPRRGSRSASSSA. Residues 11–21 show a composition bias toward basic residues; that stretch reads RNRRRRPRRGS.

Belongs to the cucumovirus capsid protein family.

It localises to the virion. Its function is as follows. Capsid protein. Probably binds RNA and plays a role in packaging. The protein is Capsid protein of Cucumber mosaic virus (strain M48) (CMV).